Here is a 396-residue protein sequence, read N- to C-terminus: Flavohemoprotein (396 aa).

In terms of domain architecture, Globin spans 1-136 (MLDAQTIATV…LANVFINREA (136 aa)). His-85 provides a ligand contact to heme b. Active-site charge relay system residues include Tyr-95 and Glu-135. Positions 147-396 (GGWEGTRDFR…YECFGPHKVL (250 aa)) are reductase. The 106-residue stretch at 150–255 (EGTRDFRIVA…VAPAGDFFMA (106 aa)) folds into the FAD-binding FR-type domain. FAD is bound by residues Tyr-188 and 204 to 207 (RQYS). 268 to 273 (GVGQTP) is a binding site for NADP(+). Residue 389-392 (CFGP) participates in FAD binding.

It belongs to the globin family. Two-domain flavohemoproteins subfamily. This sequence in the C-terminal section; belongs to the flavoprotein pyridine nucleotide cytochrome reductase family. The cofactor is heme b. FAD serves as cofactor.

It catalyses the reaction 2 nitric oxide + NADPH + 2 O2 = 2 nitrate + NADP(+) + H(+). The catalysed reaction is 2 nitric oxide + NADH + 2 O2 = 2 nitrate + NAD(+) + H(+). In terms of biological role, is involved in NO detoxification in an aerobic process, termed nitric oxide dioxygenase (NOD) reaction that utilizes O(2) and NAD(P)H to convert NO to nitrate, which protects the bacterium from various noxious nitrogen compounds. Therefore, plays a central role in the inducible response to nitrosative stress. In Shigella flexneri, this protein is Flavohemoprotein.